The sequence spans 146 residues: Hemoglobin cathodic subunit beta (146 aa).

One can recognise a Globin domain in the interval 2–146 (EWSSSERSTI…LIHALSRQYF (145 aa)). Heme b is bound by residues histidine 63 and histidine 92.

This sequence belongs to the globin family. Heterotetramer of two alpha chains and two beta chains. Red blood cells.

Functionally, involved in oxygen transport from gills to the various peripheral tissues. The protein is Hemoglobin cathodic subunit beta of Gymnothorax unicolor (Brown moray).